Here is an 872-residue protein sequence, read N- to C-terminus: Alanine--tRNA ligase (872 aa).

Residues H567, H571, C669, and H673 each coordinate Zn(2+).

It belongs to the class-II aminoacyl-tRNA synthetase family. It depends on Zn(2+) as a cofactor.

The protein resides in the cytoplasm. It catalyses the reaction tRNA(Ala) + L-alanine + ATP = L-alanyl-tRNA(Ala) + AMP + diphosphate. Its function is as follows. Catalyzes the attachment of alanine to tRNA(Ala) in a two-step reaction: alanine is first activated by ATP to form Ala-AMP and then transferred to the acceptor end of tRNA(Ala). Also edits incorrectly charged Ser-tRNA(Ala) and Gly-tRNA(Ala) via its editing domain. This is Alanine--tRNA ligase from Streptococcus thermophilus (strain CNRZ 1066).